A 156-amino-acid chain; its full sequence is MKITLLAVGTKMPRWVDEAYADYAKRLPREVQLELKEIKPEKRGGGVTAEKGIAAEHARLMAALPPRAKLVVLDERGRNWTTMQLADNLKGWLADGQDIAIVIGGADGTAAELKSRADILLQLSAMTLPHGMVRVLLAEQVYRAVSILNGHPYHRE.

S-adenosyl-L-methionine is bound by residues Leu-73, Gly-104, and 123–128 (LSAMTL).

Belongs to the RNA methyltransferase RlmH family. Homodimer.

The protein resides in the cytoplasm. The enzyme catalyses pseudouridine(1915) in 23S rRNA + S-adenosyl-L-methionine = N(3)-methylpseudouridine(1915) in 23S rRNA + S-adenosyl-L-homocysteine + H(+). Specifically methylates the pseudouridine at position 1915 (m3Psi1915) in 23S rRNA. The polypeptide is Ribosomal RNA large subunit methyltransferase H (Laribacter hongkongensis (strain HLHK9)).